Consider the following 117-residue polypeptide: Large ribosomal subunit protein bL20 (117 aa).

It belongs to the bacterial ribosomal protein bL20 family.

Binds directly to 23S ribosomal RNA and is necessary for the in vitro assembly process of the 50S ribosomal subunit. It is not involved in the protein synthesizing functions of that subunit. The polypeptide is Large ribosomal subunit protein bL20 (Rickettsia africae (strain ESF-5)).